A 446-amino-acid chain; its full sequence is Calcium-binding and coiled-coil domain-containing protein 2 (446 aa).

The CLIR signature appears at 133-136; the sequence is ILVV. Residues 137-349 adopt a coiled-coil conformation; it reads TTQGEVEEIE…RENSRLLSYM (213 aa). The short motif at 203–206 is the LIR-like element; it reads DYWE. An interaction with LGALS8 region spans residues 371 to 381; sequence NPGLVYGNPYS. Positions 395-446 are interaction with MYO6; that stretch reads KKCPICKADDICDHILEQQQMQPLCLNCPICDKIFPATEKQIFEDHVFCHSL. A UBZ1-type zinc finger spans residues 419–444; sequence CLNCPICDKIFPATEKQIFEDHVFCH. Residues C422, C425, H440, and H444 each coordinate Zn(2+). S445 is subject to Phosphoserine.

Belongs to the CALCOCO family. As to quaternary structure, dimer. Part of a complex consisting of CALCOCO2, TAX1BP1 and MYO6. Interacts with MYO6. Interacts with GEMIN4. Interacts with ATG8 family members MAP1LC3A, MAP1LC3B, GABARAP, GABARAPL1 and GABARAPL2. Interacts with ATG8 family member MAP1LC3C. Interacts with LGALS8. Interacts with TOM1; the interaction is indirect and is mediated by MYO6, which acts as a bridge between TOM1 and CALCOCO2. Interacts with AZI2.

It localises to the cytoplasm. Its subcellular location is the perinuclear region. The protein resides in the cytoskeleton. It is found in the cytoplasmic vesicle. The protein localises to the autophagosome membrane. In terms of biological role, xenophagy-specific receptor required for autophagy-mediated intracellular bacteria degradation. Acts as an effector protein of galectin-sensed membrane damage that restricts the proliferation of infecting pathogens upon entry into the cytosol by targeting LGALS8-associated bacteria for autophagy. Initially orchestrates bacteria targeting to autophagosomes and subsequently ensures pathogen degradation by regulating pathogen-containing autophagosome maturation. Bacteria targeting to autophagosomes relies on its interaction with MAP1LC3A, MAP1LC3B and/or GABARAPL2, whereas regulation of pathogen-containing autophagosome maturation requires the interaction with MAP3LC3C. May play a role in ruffle formation and actin cytoskeleton organization and seems to negatively regulate constitutive secretion. This chain is Calcium-binding and coiled-coil domain-containing protein 2, found in Pongo abelii (Sumatran orangutan).